Here is a 518-residue protein sequence, read N- to C-terminus: Bifunctional purine biosynthesis protein PurH (518 aa).

Residues 1 to 144 form the MGS-like domain; sequence MSKRALISVS…KNHAAVTVVC (144 aa).

The protein belongs to the PurH family.

It carries out the reaction (6R)-10-formyltetrahydrofolate + 5-amino-1-(5-phospho-beta-D-ribosyl)imidazole-4-carboxamide = 5-formamido-1-(5-phospho-D-ribosyl)imidazole-4-carboxamide + (6S)-5,6,7,8-tetrahydrofolate. The catalysed reaction is IMP + H2O = 5-formamido-1-(5-phospho-D-ribosyl)imidazole-4-carboxamide. It functions in the pathway purine metabolism; IMP biosynthesis via de novo pathway; 5-formamido-1-(5-phospho-D-ribosyl)imidazole-4-carboxamide from 5-amino-1-(5-phospho-D-ribosyl)imidazole-4-carboxamide (10-formyl THF route): step 1/1. The protein operates within purine metabolism; IMP biosynthesis via de novo pathway; IMP from 5-formamido-1-(5-phospho-D-ribosyl)imidazole-4-carboxamide: step 1/1. In Lactococcus lactis subsp. cremoris (strain MG1363), this protein is Bifunctional purine biosynthesis protein PurH.